A 71-amino-acid polypeptide reads, in one-letter code: Ceratotoxin-D (71 aa).

Residues 1-23 (MANLKAVFLICILAFIAFHCVVG) form the signal peptide. Residues 24–35 (APTAEDSIVVKR) constitute a propeptide that is removed on maturation.

Homomer of four to six subunits.

It localises to the secreted. Functionally, female-specific peptides with potent activity against Gram-positive and Gram-negative bacteria. They have as well hemolytic activity. The protein is Ceratotoxin-D (CTXD) of Ceratitis capitata (Mediterranean fruit fly).